Reading from the N-terminus, the 238-residue chain is U2 small nuclear ribonucleoprotein A' (238 aa).

3 LRR repeats span residues 53-74 (PTHILDLTNNDLIMIPDLSRRD), 75-95 (DIHTLLLGRNNIVEVDGRLLP), and 97-118 (NVQNLTLSNNSIRRFEDLQRLR). The LRRCT domain occupies 132-170 (NQVCHLANYREHVLRLVPHLETLDFQNVTAEERKSAMSF). The tract at residues 167 to 189 (AMSFPRQADGDTLGPVNTAIRDN) is disordered.

The protein belongs to the U2 small nuclear ribonucleoprotein A family. In terms of assembly, belongs to the CWC complex (or CEF1-associated complex), a spliceosome sub-complex reminiscent of a late-stage spliceosome composed of the U2, U5 and U6 snRNAs and at least BUD13, BUD31, BRR2, CDC40, CEF1, CLF1, CUS1, CWC2, CWC15, CWC21, CWC22, CWC23, CWC24, CWC25, CWC27, ECM2, HSH155, IST3, ISY1, LEA1, MSL1, NTC20, PRP8, PRP9, PRP11, PRP19, PRP21, PRP22, PRP45, PRP46, SLU7, SMB1, SMD1, SMD2, SMD3, SMX2, SMX3, SNT309, SNU114, SPP2, SYF1, SYF2, RSE1 and YJU2. Interacts with MSL1.

It is found in the nucleus. Involved in pre-mRNA splicing. Associates to U2 snRNA in a MSL1 dependent manner and is required for normal accumulation of U2 snRNA. Required for the spliceosome assembly and the efficient addition of U2 snRNP onto the pre-mRNA. This Saccharomyces cerevisiae (strain ATCC 204508 / S288c) (Baker's yeast) protein is U2 small nuclear ribonucleoprotein A' (LEA1).